Reading from the N-terminus, the 219-residue chain is Dynein light chain Tctex-type 4 (219 aa).

The segment at 1-84 (MAGRPVPAGR…RRPSLGPVPP (84 aa)) is disordered. The span at 10–20 (RQEEELAKDPG) shows a compositional bias: basic and acidic residues. Residue serine 64 is modified to Phosphoserine.

The protein belongs to the dynein light chain Tctex-type family. As to quaternary structure, interacts with ENG/endoglin, TGFBR2 and TGFBR3. Interacts with PPP1CC.

It is found in the cell projection. It localises to the cilium. Its subcellular location is the flagellum. The protein resides in the cytoplasmic vesicle. The protein localises to the secretory vesicle. It is found in the acrosome. It localises to the cytoplasm. Its subcellular location is the cytoskeleton. The protein resides in the cilium axoneme. The protein localises to the nucleus. It is found in the microtubule organizing center. The chain is Dynein light chain Tctex-type 4 (DYNLT4) from Sus scrofa (Pig).